The primary structure comprises 377 residues: Lipoyl synthase, mitochondrial (377 aa).

Residues Cys103, Cys108, Cys114, Cys134, Cys138, Cys141, and Ser349 each coordinate [4Fe-4S] cluster. The 220-residue stretch at 119 to 338 (EHGTQTATIM…EERGNELGFL (220 aa)) folds into the Radical SAM core domain.

It belongs to the radical SAM superfamily. Lipoyl synthase family. [4Fe-4S] cluster serves as cofactor.

The protein resides in the mitochondrion. The enzyme catalyses [[Fe-S] cluster scaffold protein carrying a second [4Fe-4S](2+) cluster] + N(6)-octanoyl-L-lysyl-[protein] + 2 oxidized [2Fe-2S]-[ferredoxin] + 2 S-adenosyl-L-methionine + 4 H(+) = [[Fe-S] cluster scaffold protein] + N(6)-[(R)-dihydrolipoyl]-L-lysyl-[protein] + 4 Fe(3+) + 2 hydrogen sulfide + 2 5'-deoxyadenosine + 2 L-methionine + 2 reduced [2Fe-2S]-[ferredoxin]. The protein operates within protein modification; protein lipoylation via endogenous pathway; protein N(6)-(lipoyl)lysine from octanoyl-[acyl-carrier-protein]: step 2/2. Functionally, catalyzes the radical-mediated insertion of two sulfur atoms into the C-6 and C-8 positions of the octanoyl moiety bound to the lipoyl domains of lipoate-dependent enzymes, thereby converting the octanoylated domains into lipoylated derivatives. The polypeptide is Lipoyl synthase, mitochondrial (Drosophila melanogaster (Fruit fly)).